Reading from the N-terminus, the 358-residue chain is Starch-binding domain-containing protein 1 (358 aa).

At 1-6 (MGAVWS) the chain is on the extracellular side. The chain crosses the membrane as a helical span at residues 7–23 (ALLVGGGLAGALFVWLL). Residues 24–358 (RGGPGDTGKD…KVVHAWWGIH (335 aa)) lie on the Cytoplasmic side of the membrane. Residues 30–42 (TGKDGDAEQEKDA) are compositionally biased toward basic and acidic residues. Disordered stretches follow at residues 30-70 (TGKD…QELV) and 104-151 (SREV…SPMG). Positions 50–66 (PGGHQSGSSGLSPGPSG) are enriched in low complexity. Ser-65 carries the post-translational modification Phosphoserine. The segment covering 106-115 (EVCDNSREHV) has biased composition (basic and acidic residues). Phosphoserine is present on Ser-117. A compositionally biased stretch (polar residues) spans 126-140 (PATSETSNSRSYSEV). Phosphoserine occurs at positions 148, 175, 188, and 194. The LIR motif lies at 200–206 (HEEWEMV). Ser-210, Ser-211, and Ser-220 each carry phosphoserine. In terms of domain architecture, CBM20 spans 258-357 (PAGSQQVSVR…DKVVHAWWGI (100 aa)).

Interacts with the ATG8 family proteins GABARAP and GABARAPL1. Interacts with several glycogen-associated proteins, such as GYS2 (liver glycogen synthase), GDE (glycogen debranching enzyme), GBE1 (glycogen branching enzyme 1) and EPM2A (Laforin). In terms of processing, ubiquitinated, which leads to proteasomal degradation. As to expression, expressed at high level in skeletal and cardiac muscles. Moderately expressed in liver and placenta. No expression is found in pancreas, kidney or lung. Present in skeletal muscle, heart and placenta (at protein level).

Its subcellular location is the preautophagosomal structure membrane. It localises to the endoplasmic reticulum membrane. The protein localises to the cell membrane. The protein resides in the sarcolemma. It is found in the T-tubule. Functionally, acts as a cargo receptor for glycogen. Delivers its cargo to an autophagic pathway called glycophagy, resulting in the transport of glycogen to lysosomes. In Homo sapiens (Human), this protein is Starch-binding domain-containing protein 1.